Consider the following 650-residue polypeptide: Putative secretin GspD (650 aa).

The N-terminal stretch at Met-1–Ala-23 is a signal peptide. The N0 stretch occupies residues Glu-24–Gly-122. The N1 stretch occupies residues Glu-124–Gly-188. The N2 stretch occupies residues Thr-189–Ser-263. Residues Gly-266–Asp-342 are N3. The interval Arg-345–Asp-596 is secretin. The interval Asp-598–Arg-650 is s domain.

It belongs to the bacterial secretin family. GSP D subfamily. In terms of assembly, forms a cylindrical channel with 15 subunits; approximately 25% of the particles have 16-subunit channels. Closed pentadeacameric channels are 180 Angstroms long and 145 Angstroms in diameter. Each subunit turns in a clock-wise manner around the channel.

It is found in the cell outer membrane. Its function is as follows. Involved in a type II secretion system (T2SS, formerly general secretion pathway, GSP) for the export of folded proteins across the outer membrane. This subunit would form the outer membrane channel. This chain is Putative secretin GspD (gspD), found in Escherichia coli (strain K12).